The primary structure comprises 160 residues: Nucleotide-binding protein VV1636 (160 aa).

The protein belongs to the YajQ family.

Nucleotide-binding protein. The polypeptide is Nucleotide-binding protein VV1636 (Vibrio vulnificus (strain YJ016)).